A 566-amino-acid polypeptide reads, in one-letter code: Proline--tRNA ligase (566 aa).

Belongs to the class-II aminoacyl-tRNA synthetase family. ProS type 1 subfamily. As to quaternary structure, homodimer.

The protein localises to the cytoplasm. The enzyme catalyses tRNA(Pro) + L-proline + ATP = L-prolyl-tRNA(Pro) + AMP + diphosphate. Its function is as follows. Catalyzes the attachment of proline to tRNA(Pro) in a two-step reaction: proline is first activated by ATP to form Pro-AMP and then transferred to the acceptor end of tRNA(Pro). As ProRS can inadvertently accommodate and process non-cognate amino acids such as alanine and cysteine, to avoid such errors it has two additional distinct editing activities against alanine. One activity is designated as 'pretransfer' editing and involves the tRNA(Pro)-independent hydrolysis of activated Ala-AMP. The other activity is designated 'posttransfer' editing and involves deacylation of mischarged Ala-tRNA(Pro). The misacylated Cys-tRNA(Pro) is not edited by ProRS. The sequence is that of Proline--tRNA ligase from Bacillus cereus (strain AH187).